A 215-amino-acid chain; its full sequence is 3-isopropylmalate dehydratase small subunit (215 aa).

Belongs to the LeuD family. LeuD type 1 subfamily. Heterodimer of LeuC and LeuD.

It carries out the reaction (2R,3S)-3-isopropylmalate = (2S)-2-isopropylmalate. Its pathway is amino-acid biosynthesis; L-leucine biosynthesis; L-leucine from 3-methyl-2-oxobutanoate: step 2/4. Catalyzes the isomerization between 2-isopropylmalate and 3-isopropylmalate, via the formation of 2-isopropylmaleate. In Hahella chejuensis (strain KCTC 2396), this protein is 3-isopropylmalate dehydratase small subunit.